Reading from the N-terminus, the 96-residue chain is uncharacterized protein (96 aa).

3 helical membrane-spanning segments follow: residues 14–34, 38–58, and 67–87; these read FIEG…KYWA, LAVT…LLVL, and WPLK…GNFL.

It is found in the cell membrane. This is an uncharacterized protein from Bacillus subtilis (strain 168).